Here is a 182-residue protein sequence, read N- to C-terminus: Large ribosomal subunit protein uL6 (182 aa).

The protein belongs to the universal ribosomal protein uL6 family. In terms of assembly, part of the 50S ribosomal subunit.

Functionally, this protein binds to the 23S rRNA, and is important in its secondary structure. It is located near the subunit interface in the base of the L7/L12 stalk, and near the tRNA binding site of the peptidyltransferase center. This is Large ribosomal subunit protein uL6 from Caldicellulosiruptor saccharolyticus (strain ATCC 43494 / DSM 8903 / Tp8T 6331).